The primary structure comprises 321 residues: tRNA U34 carboxymethyltransferase (321 aa).

Residues lysine 90, tryptophan 104, lysine 109, glycine 129, 151-153, 180-181, methionine 195, tyrosine 199, and arginine 314 each bind carboxy-S-adenosyl-L-methionine; these read DPT and IE.

It belongs to the class I-like SAM-binding methyltransferase superfamily. CmoB family. As to quaternary structure, homotetramer.

The enzyme catalyses carboxy-S-adenosyl-L-methionine + 5-hydroxyuridine(34) in tRNA = 5-carboxymethoxyuridine(34) in tRNA + S-adenosyl-L-homocysteine + H(+). In terms of biological role, catalyzes carboxymethyl transfer from carboxy-S-adenosyl-L-methionine (Cx-SAM) to 5-hydroxyuridine (ho5U) to form 5-carboxymethoxyuridine (cmo5U) at position 34 in tRNAs. The polypeptide is tRNA U34 carboxymethyltransferase (Actinobacillus succinogenes (strain ATCC 55618 / DSM 22257 / CCUG 43843 / 130Z)).